Reading from the N-terminus, the 125-residue chain is Multifunctional methyltransferase subunit TRM112-like protein (125 aa).

The TRM112 domain occupies 2-121; that stretch reads KLFVHNFMSS…RDGIPNMLKV (120 aa).

This sequence belongs to the TRM112 family.

Its subcellular location is the nucleus. It localises to the nucleoplasm. The protein localises to the cytoplasm. The protein resides in the perinuclear region. Acts as an activator of both RNA and protein methyltransferases. The polypeptide is Multifunctional methyltransferase subunit TRM112-like protein (Caenorhabditis elegans).